The sequence spans 188 residues: Elongation factor P (188 aa).

This sequence belongs to the elongation factor P family.

The protein localises to the cytoplasm. The protein operates within protein biosynthesis; polypeptide chain elongation. Involved in peptide bond synthesis. Stimulates efficient translation and peptide-bond synthesis on native or reconstituted 70S ribosomes in vitro. Probably functions indirectly by altering the affinity of the ribosome for aminoacyl-tRNA, thus increasing their reactivity as acceptors for peptidyl transferase. This Ureaplasma urealyticum serovar 10 (strain ATCC 33699 / Western) protein is Elongation factor P.